Here is a 142-residue protein sequence, read N- to C-terminus: HTH-type transcriptional regulator LrpA1 (142 aa).

The region spanning methionine 1–aspartate 72 is the HTH asnC-type domain. The segment at residues tyrosine 22–aspartate 41 is a DNA-binding region (H-T-H motif).

Functionally, transcription factor that regulates genes involved in amino acid metabolism. Represses the aspB3 gene, coding for an aspartate transaminase, in the presence of L-aspartate. Another target gene is the basal transcriptional regulator tfbB. Also binds its own promoter. This Halobacterium salinarum (strain ATCC 29341 / DSM 671 / R1) protein is HTH-type transcriptional regulator LrpA1 (lrpA1).